Reading from the N-terminus, the 268-residue chain is tRNA pseudouridine synthase A (268 aa).

D52 acts as the Nucleophile in catalysis. Y113 is a substrate binding site.

This sequence belongs to the tRNA pseudouridine synthase TruA family. As to quaternary structure, homodimer.

It carries out the reaction uridine(38/39/40) in tRNA = pseudouridine(38/39/40) in tRNA. In terms of biological role, formation of pseudouridine at positions 38, 39 and 40 in the anticodon stem and loop of transfer RNAs. This Rhizobium leguminosarum bv. trifolii (strain WSM2304) protein is tRNA pseudouridine synthase A.